The following is a 495-amino-acid chain: uncharacterized protein (495 aa).

Positions 1 to 17 (MRTLSLLILFLSTFLFA) are cleaved as a signal peptide.

This is an uncharacterized protein from Aquifex aeolicus (strain VF5).